Here is a 574-residue protein sequence, read N- to C-terminus: Proline--tRNA ligase (574 aa).

Belongs to the class-II aminoacyl-tRNA synthetase family. ProS type 1 subfamily. As to quaternary structure, homodimer.

Its subcellular location is the cytoplasm. The catalysed reaction is tRNA(Pro) + L-proline + ATP = L-prolyl-tRNA(Pro) + AMP + diphosphate. Its function is as follows. Catalyzes the attachment of proline to tRNA(Pro) in a two-step reaction: proline is first activated by ATP to form Pro-AMP and then transferred to the acceptor end of tRNA(Pro). As ProRS can inadvertently accommodate and process non-cognate amino acids such as alanine and cysteine, to avoid such errors it has two additional distinct editing activities against alanine. One activity is designated as 'pretransfer' editing and involves the tRNA(Pro)-independent hydrolysis of activated Ala-AMP. The other activity is designated 'posttransfer' editing and involves deacylation of mischarged Ala-tRNA(Pro). The misacylated Cys-tRNA(Pro) is not edited by ProRS. This Aeromonas hydrophila subsp. hydrophila (strain ATCC 7966 / DSM 30187 / BCRC 13018 / CCUG 14551 / JCM 1027 / KCTC 2358 / NCIMB 9240 / NCTC 8049) protein is Proline--tRNA ligase.